Reading from the N-terminus, the 309-residue chain is Carbamate kinase 3 (309 aa).

It belongs to the carbamate kinase family.

Its subcellular location is the cytoplasm. The enzyme catalyses hydrogencarbonate + NH4(+) + ATP = carbamoyl phosphate + ADP + H2O + H(+). The protein operates within metabolic intermediate metabolism; carbamoyl phosphate degradation; CO(2) and NH(3) from carbamoyl phosphate: step 1/1. In Staphylococcus aureus (strain USA300), this protein is Carbamate kinase 3 (arcC3).